We begin with the raw amino-acid sequence, 120 residues long: MFVLNGYEYVLGFLLACSLIPILALTASKILRPSGGGPERRTTYESGMEPIGGAWIQFNIRYYMFALVFVVFDVETVFLYPWAVAFSRLGLLAFVEALIFIAILVVALVYAWRKGALEWS.

The next 3 membrane-spanning stretches (helical) occupy residues 7–27 (YEYV…ALTA), 64–84 (MFAL…PWAV), and 89–109 (LGLL…VALV).

It belongs to the complex I subunit 3 family. In terms of assembly, NDH-1 can be composed of about 15 different subunits; different subcomplexes with different compositions have been identified which probably have different functions.

The protein resides in the cellular thylakoid membrane. The enzyme catalyses a plastoquinone + NADH + (n+1) H(+)(in) = a plastoquinol + NAD(+) + n H(+)(out). The catalysed reaction is a plastoquinone + NADPH + (n+1) H(+)(in) = a plastoquinol + NADP(+) + n H(+)(out). NDH-1 shuttles electrons from an unknown electron donor, via FMN and iron-sulfur (Fe-S) centers, to quinones in the respiratory and/or the photosynthetic chain. The immediate electron acceptor for the enzyme in this species is believed to be plastoquinone. Couples the redox reaction to proton translocation, and thus conserves the redox energy in a proton gradient. Cyanobacterial NDH-1 also plays a role in inorganic carbon-concentration. The polypeptide is NAD(P)H-quinone oxidoreductase subunit 3 (Crocosphaera subtropica (strain ATCC 51142 / BH68) (Cyanothece sp. (strain ATCC 51142))).